Reading from the N-terminus, the 914-residue chain is Protein translocase subunit SecA (914 aa).

Residues glutamine 87, 105–109 (GEGKT), and aspartate 500 contribute to the ATP site. Cysteine 898, cysteine 900, cysteine 909, and histidine 910 together coordinate Zn(2+).

The protein belongs to the SecA family. In terms of assembly, monomer and homodimer. Part of the essential Sec protein translocation apparatus which comprises SecA, SecYEG and auxiliary proteins SecDF-YajC and YidC. Zn(2+) is required as a cofactor.

Its subcellular location is the cell inner membrane. The protein resides in the cytoplasm. It catalyses the reaction ATP + H2O + cellular proteinSide 1 = ADP + phosphate + cellular proteinSide 2.. Functionally, part of the Sec protein translocase complex. Interacts with the SecYEG preprotein conducting channel. Has a central role in coupling the hydrolysis of ATP to the transfer of proteins into and across the cell membrane, serving as an ATP-driven molecular motor driving the stepwise translocation of polypeptide chains across the membrane. The polypeptide is Protein translocase subunit SecA (Acidithiobacillus ferrooxidans (strain ATCC 23270 / DSM 14882 / CIP 104768 / NCIMB 8455) (Ferrobacillus ferrooxidans (strain ATCC 23270))).